The chain runs to 305 residues: MNRLLKTIIENNRKWISEGKVASYIPELSKMDKNLLGISVCTLGGEEYWEGDAEVKFTIQSISKIVTLMLAIIDNGEDYVFSKVGMEPTETAFNSIVNLEAKESHKPINPMINAGAIVVASMVAGKDSDEKFDRILKFTRKISGNNDIDINLNVYESEKETGHRNRALAYFMKSTGALKGNVEEILDVYFKQCSIEITCKDLARIGVMLANDGVSPYTGDRIVPRHVARIVKTIMVTCGMYDASGNFAVHIGIPAKSGVGGGIIACAPRRMGIGVLGTALDEKGNSIAGTKILEELSKQLDLSIF.

Ser61, Asn113, Glu158, Asn165, Tyr189, Tyr241, and Val259 together coordinate substrate.

The protein belongs to the glutaminase family. In terms of assembly, homotetramer.

It carries out the reaction L-glutamine + H2O = L-glutamate + NH4(+). The polypeptide is Glutaminase (Clostridium botulinum (strain ATCC 19397 / Type A)).